The following is a 967-amino-acid chain: MSEYKETLNLLQTPFPMKGDLPRREPALVERWAAQRVYARMRAAAAGRPPFVLHDGPPYANGDIHIGHAVNKVLKDIVLKSRFAAGYDAQWIPGWDCHGMPIEHRIEQLHGRGLPPEAVQRLCREYAFEQTERQRRDFLRLGLLGDWPHAFRTMDFRTEANELRFLERIRARGLLYRGQKPVNWCVDCQSALAEAELEYARKTSVAIHAGLRVRDPVDFASRFRRRPVLDKPAMLVVWTTTPWTIPGNAAAGVRADAPYGLYDTPGALIVVAQPLADALFASLGVDHALCALARGRELVGLALGQPFFAGRDVPVVEAEFVTLDAGTGIVHLAPAHGAEDAELCRRLGIAGENVVDGAGRFAADLPEIGGLPLADGIARIVAKLRADGTLVREAAFEHAYPHCWRHKTPILFRSTPQWFIGMDIECEQGEADPGRADVTEEAGATGEARKVGKAEEAEEAGPVKTLRASARDAIADVPFYPPSARQRMEAMIDGRPDWCVSRQRTWGVPLPYFVRRDDRSLHPRSARLVEAVAARVERDGIAAWSRLRPAELGVDENAYEKLSDTLDVWFDSGSIHATVYRDAARADTGGYPADLYLEGADQHRGWFGASLMTGCAADGRAPFRAILTHGFVVDGAGRKMSKSLGNTVSPQRIADTRGADILRLWIASTDYAAEMSISDEILERVVETYRRMRNTLRFLLQNVADFDPRDDAVPAGQLLDVDRYALARCREFVDACRSAYARYDFLAVTRLAHGYCAEELGGFYLDALKDRLYASVADGVERRAAQTALHSVLANLLISIAPILSFTAEEAWTVFAGDERDSVFLHTWDEHAPPPDDAALARWAHVRALRPHVTKALEEARGAALIGRSSEAELVVRAPRDVLDALAPLHGELAAVFIVAGVTLETADQIAVAVARTPLARCERCWRHEPSVAAHASGDALCARCRHALSRRARAERSEPRAAVGSR.

Positions 58–68 (PYANGDIHIGH) match the 'HIGH' region motif. Residues 430–463 (EADPGRADVTEEAGATGEARKVGKAEEAEEAGPV) form a disordered region. Residue glutamate 598 coordinates L-isoleucyl-5'-AMP. Positions 639–643 (KMSKS) match the 'KMSKS' region motif. Position 642 (lysine 642) interacts with ATP. Zn(2+) contacts are provided by cysteine 922, cysteine 925, cysteine 942, and cysteine 945.

Belongs to the class-I aminoacyl-tRNA synthetase family. IleS type 1 subfamily. In terms of assembly, monomer. Zn(2+) is required as a cofactor.

The protein resides in the cytoplasm. It catalyses the reaction tRNA(Ile) + L-isoleucine + ATP = L-isoleucyl-tRNA(Ile) + AMP + diphosphate. Functionally, catalyzes the attachment of isoleucine to tRNA(Ile). As IleRS can inadvertently accommodate and process structurally similar amino acids such as valine, to avoid such errors it has two additional distinct tRNA(Ile)-dependent editing activities. One activity is designated as 'pretransfer' editing and involves the hydrolysis of activated Val-AMP. The other activity is designated 'posttransfer' editing and involves deacylation of mischarged Val-tRNA(Ile). The polypeptide is Isoleucine--tRNA ligase 2 (Burkholderia pseudomallei (strain K96243)).